A 240-amino-acid chain; its full sequence is MKPAYFISDLHLSEKQPELTALLLRFLRSSAAGQARAIYILGDLFDFWVGDDEVSELNTSVAREIRKLSDKGVAVFFVRGNRDFLIGQDFCRQAGMTLLPDYSVLDLFGCKTLICHGDTLCTDDRAYQRFRKIVHRKRLQKLFLMLPLKWRTRLATKIRRVSKMEKQVKPADIMDVNAAFTARQVRAFGAERLIHGHTHREHIHHENGFTRIVLGDWHNDYASILRVDGDGAVFVPLEKY.

Residues Asp-9, His-11, Asp-43, Asn-81, and His-116 each contribute to the Mn(2+) site. 81 to 82 contacts substrate; sequence NR. 5 residues coordinate substrate: Asp-124, Ser-162, Lys-166, Lys-169, and His-197. Mn(2+)-binding residues include His-197 and His-199.

Belongs to the LpxH family. It depends on Mn(2+) as a cofactor.

The protein localises to the cell inner membrane. The catalysed reaction is UDP-2-N,3-O-bis[(3R)-3-hydroxytetradecanoyl]-alpha-D-glucosamine + H2O = 2-N,3-O-bis[(3R)-3-hydroxytetradecanoyl]-alpha-D-glucosaminyl 1-phosphate + UMP + 2 H(+). The protein operates within glycolipid biosynthesis; lipid IV(A) biosynthesis; lipid IV(A) from (3R)-3-hydroxytetradecanoyl-[acyl-carrier-protein] and UDP-N-acetyl-alpha-D-glucosamine: step 4/6. Hydrolyzes the pyrophosphate bond of UDP-2,3-diacylglucosamine to yield 2,3-diacylglucosamine 1-phosphate (lipid X) and UMP by catalyzing the attack of water at the alpha-P atom. Involved in the biosynthesis of lipid A, a phosphorylated glycolipid that anchors the lipopolysaccharide to the outer membrane of the cell. This is UDP-2,3-diacylglucosamine hydrolase from Neisseria meningitidis serogroup B (strain ATCC BAA-335 / MC58).